The chain runs to 328 residues: Methionyl-tRNA formyltransferase (328 aa).

Serine 110–proline 113 is a (6S)-5,6,7,8-tetrahydrofolate binding site.

Belongs to the Fmt family.

It carries out the reaction L-methionyl-tRNA(fMet) + (6R)-10-formyltetrahydrofolate = N-formyl-L-methionyl-tRNA(fMet) + (6S)-5,6,7,8-tetrahydrofolate + H(+). Functionally, attaches a formyl group to the free amino group of methionyl-tRNA(fMet). The formyl group appears to play a dual role in the initiator identity of N-formylmethionyl-tRNA by promoting its recognition by IF2 and preventing the misappropriation of this tRNA by the elongation apparatus. The polypeptide is Methionyl-tRNA formyltransferase (Prochlorococcus marinus (strain MIT 9515)).